Reading from the N-terminus, the 31-residue chain is Aspartate aminotransferase, cytoplasmic (31 aa).

The protein belongs to the class-I pyridoxal-phosphate-dependent aminotransferase family. In terms of assembly, homodimer. The cofactor is pyridoxal 5'-phosphate.

It localises to the cytoplasm. The catalysed reaction is L-aspartate + 2-oxoglutarate = oxaloacetate + L-glutamate. The enzyme catalyses L-cysteine + 2-oxoglutarate = 2-oxo-3-sulfanylpropanoate + L-glutamate. It catalyses the reaction (2S)-2-aminobutanoate + 2-oxoglutarate = 2-oxobutanoate + L-glutamate. It carries out the reaction 3-sulfino-L-alanine + 2-oxoglutarate = 3-sulfinopyruvate + L-glutamate. Biosynthesis of L-glutamate from L-aspartate or L-cysteine. Important regulator of levels of glutamate, the major excitatory neurotransmitter of the vertebrate central nervous system. Acts as a scavenger of glutamate in brain neuroprotection. The aspartate aminotransferase activity is involved in hepatic glucose synthesis during development and in adipocyte glyceroneogenesis. Using L-cysteine as substrate, regulates levels of mercaptopyruvate, an important source of hydrogen sulfide. Mercaptopyruvate is converted into H(2)S via the action of 3-mercaptopyruvate sulfurtransferase (3MST). Hydrogen sulfide is an important synaptic modulator and neuroprotectant in the brain. This chain is Aspartate aminotransferase, cytoplasmic, found in Oryctolagus cuniculus (Rabbit).